A 1303-amino-acid polypeptide reads, in one-letter code: Alpha,alpha-trehalose-phosphate synthase [UDP-forming] 2 (1303 aa).

Disordered regions lie at residues 1 to 48 (MTVV…NNTT) and 205 to 251 (LQRR…FRGK). Residues 212 to 221 (SSRGGSLRGS) are compositionally biased toward low complexity.

The protein in the N-terminal section; belongs to the glycosyltransferase 20 family. In the C-terminal section; belongs to the gob-1 trehalose phosphatase family.

The catalysed reaction is D-glucose 6-phosphate + UDP-alpha-D-glucose = alpha,alpha-trehalose 6-phosphate + UDP + H(+). Catalyzes the production of trehalose from glucose-6-phosphate and UDP-alpha-D-glucose in a 2 step process. The chain is Alpha,alpha-trehalose-phosphate synthase [UDP-forming] 2 (tps-2) from Aphelenchoides avenae (Mycophagous nematode worm).